Reading from the N-terminus, the 418-residue chain is Geranylgeranyl pyrophosphate synthase (418 aa).

Positions 51–64 (TSSTGIPTSLNATP) are enriched in polar residues. The tract at residues 51–73 (TSSTGIPTSLNATPTKPVLRPVP) is disordered. Positions 143, 146, and 175 each coordinate isopentenyl diphosphate. Asp182 and Asp186 together coordinate Mg(2+). Arg191 serves as a coordination point for dimethylallyl diphosphate. Arg192 provides a ligand contact to isopentenyl diphosphate. Dimethylallyl diphosphate contacts are provided by Lys269, Thr270, Gln305, Lys322, and Lys332.

It belongs to the FPP/GGPP synthase family. Mg(2+) serves as cofactor.

Its subcellular location is the cytoplasm. It carries out the reaction isopentenyl diphosphate + dimethylallyl diphosphate = (2E)-geranyl diphosphate + diphosphate. It catalyses the reaction isopentenyl diphosphate + (2E)-geranyl diphosphate = (2E,6E)-farnesyl diphosphate + diphosphate. The catalysed reaction is isopentenyl diphosphate + (2E,6E)-farnesyl diphosphate = (2E,6E,10E)-geranylgeranyl diphosphate + diphosphate. Its pathway is isoprenoid biosynthesis; farnesyl diphosphate biosynthesis; farnesyl diphosphate from geranyl diphosphate and isopentenyl diphosphate: step 1/1. The protein operates within isoprenoid biosynthesis; geranyl diphosphate biosynthesis; geranyl diphosphate from dimethylallyl diphosphate and isopentenyl diphosphate: step 1/1. It functions in the pathway isoprenoid biosynthesis; geranylgeranyl diphosphate biosynthesis; geranylgeranyl diphosphate from farnesyl diphosphate and isopentenyl diphosphate: step 1/1. Catalyzes the trans-addition of the three molecules of IPP onto DMAPP to form geranylgeranyl pyrophosphate. The polypeptide is Geranylgeranyl pyrophosphate synthase (GGS) (Fusarium fujikuroi (Bakanae and foot rot disease fungus)).